A 490-amino-acid chain; its full sequence is Bifunctional protein HldE (490 aa).

A ribokinase region spans residues 1-330 (MLDFEAVLPA…RKVLPPASLA (330 aa)). 205 to 208 (NRKE) is a binding site for ATP. Residue Asp-275 is part of the active site. A cytidylyltransferase region spans residues 358 to 490 (FTNGCFDILH…LVARAQNGKA (133 aa)).

The protein in the N-terminal section; belongs to the carbohydrate kinase PfkB family. This sequence in the C-terminal section; belongs to the cytidylyltransferase family. Homodimer.

It carries out the reaction D-glycero-beta-D-manno-heptose 7-phosphate + ATP = D-glycero-beta-D-manno-heptose 1,7-bisphosphate + ADP + H(+). The enzyme catalyses D-glycero-beta-D-manno-heptose 1-phosphate + ATP + H(+) = ADP-D-glycero-beta-D-manno-heptose + diphosphate. The protein operates within nucleotide-sugar biosynthesis; ADP-L-glycero-beta-D-manno-heptose biosynthesis; ADP-L-glycero-beta-D-manno-heptose from D-glycero-beta-D-manno-heptose 7-phosphate: step 1/4. It participates in nucleotide-sugar biosynthesis; ADP-L-glycero-beta-D-manno-heptose biosynthesis; ADP-L-glycero-beta-D-manno-heptose from D-glycero-beta-D-manno-heptose 7-phosphate: step 3/4. Catalyzes the phosphorylation of D-glycero-D-manno-heptose 7-phosphate at the C-1 position to selectively form D-glycero-beta-D-manno-heptose-1,7-bisphosphate. In terms of biological role, catalyzes the ADP transfer from ATP to D-glycero-beta-D-manno-heptose 1-phosphate, yielding ADP-D-glycero-beta-D-manno-heptose. The protein is Bifunctional protein HldE of Rhodopseudomonas palustris (strain BisB18).